Reading from the N-terminus, the 181-residue chain is Cell division protein SepF (181 aa).

The segment covering 18-27 (EDYLDDDDYD) has biased composition (acidic residues). A disordered region spans residues 18 to 42 (EDYLDDDDYDDGRAVGHDDRRAMHE). Over residues 28–42 (DGRAVGHDDRRAMHE) the composition is skewed to basic and acidic residues.

It belongs to the SepF family. Homodimer. Interacts with FtsZ.

The protein resides in the cytoplasm. Cell division protein that is part of the divisome complex and is recruited early to the Z-ring. Probably stimulates Z-ring formation, perhaps through the cross-linking of FtsZ protofilaments. Its function overlaps with FtsA. This is Cell division protein SepF from Frankia alni (strain DSM 45986 / CECT 9034 / ACN14a).